Here is a 63-residue protein sequence, read N- to C-terminus: uncharacterized protein (63 aa).

2 helical membrane passes run 3–23 (VFLI…VYYI) and 42–62 (ALVC…TKLL).

It is found in the cell membrane. This is an uncharacterized protein from Bacillus subtilis (strain 168).